The following is a 429-amino-acid chain: Ribosomal RNA small subunit methyltransferase B (429 aa).

Residues Cys254 to Lys260, Asp277, Asp303, and Asp322 each bind S-adenosyl-L-methionine. The active-site Nucleophile is the Cys375.

This sequence belongs to the class I-like SAM-binding methyltransferase superfamily. RsmB/NOP family.

The protein localises to the cytoplasm. It catalyses the reaction cytidine(967) in 16S rRNA + S-adenosyl-L-methionine = 5-methylcytidine(967) in 16S rRNA + S-adenosyl-L-homocysteine + H(+). In terms of biological role, specifically methylates the cytosine at position 967 (m5C967) of 16S rRNA. The chain is Ribosomal RNA small subunit methyltransferase B from Salmonella arizonae (strain ATCC BAA-731 / CDC346-86 / RSK2980).